Here is a 403-residue protein sequence, read N- to C-terminus: Phosphoglycerate kinase (403 aa).

Residues 22-24 (DLN), R37, 60-63 (HLGR), R119, and R156 each bind substrate. Residues K206, G302, E333, and 359–362 (GGDS) contribute to the ATP site.

Belongs to the phosphoglycerate kinase family. Monomer.

It localises to the cytoplasm. It carries out the reaction (2R)-3-phosphoglycerate + ATP = (2R)-3-phospho-glyceroyl phosphate + ADP. The protein operates within carbohydrate degradation; glycolysis; pyruvate from D-glyceraldehyde 3-phosphate: step 2/5. This Streptomyces coelicolor (strain ATCC BAA-471 / A3(2) / M145) protein is Phosphoglycerate kinase (pgk).